The primary structure comprises 292 residues: DSC E3 ubiquitin ligase complex subunit 3 (292 aa).

The Extracellular portion of the chain corresponds to 1-243 (MSAEPLLPTH…PIANIKHNKD (243 aa)). N-linked (GlcNAc...) asparagine glycosylation is found at asparagine 11, asparagine 41, asparagine 77, asparagine 99, and asparagine 145. A helical membrane pass occupies residues 244–264 (LLLGICVGFFFGVFGILLMKF). At 265–273 (DGLFNRRQK) the chain is on the cytoplasmic side. A helical membrane pass occupies residues 274 to 291 (MAIFAGVIVNVMFCLVRG). Phenylalanine 292 is a topological domain (extracellular).

Belongs to the dsc3 family. In terms of assembly, component of the DSC E3 ligase complexes composed of at least TUL1, DSC2, DSC3, UBX3, CDC48 as well as VLD1 for the vacuole-localized complex or GLD1 for the Golgi/endosome-localized complex.

Its subcellular location is the endoplasmic reticulum membrane. Functionally, component of the DSC E3 ubiquitin ligase complexes that tag proteins present in Golgi, endosome and vacuole membranes and function in protein homeostasis under non-stress conditions and support a role in protein quality control. Involved in endocytic protein trafficking. This is DSC E3 ubiquitin ligase complex subunit 3 from Saccharomyces cerevisiae (strain ATCC 204508 / S288c) (Baker's yeast).